The following is a 537-amino-acid chain: CTP synthase (537 aa).

Residues 1–265 (MVHFIFVTGG…DNKVLKFFNI (265 aa)) form an amidoligase domain region. Residue S13 coordinates CTP. A UTP-binding site is contributed by S13. ATP-binding positions include 14–19 (SLGKGL) and D71. 2 residues coordinate Mg(2+): D71 and E139. CTP contacts are provided by residues 146–148 (DIE) and K222. Residue K222 coordinates UTP. In terms of domain architecture, Glutamine amidotransferase type-1 spans 290–536 (RIAIIAKYHK…IKAAIEYNKC (247 aa)). G352 lines the L-glutamine pocket. C379 acts as the Nucleophile; for glutamine hydrolysis in catalysis. Residues 380–383 (FGMQ), E403, and R464 contribute to the L-glutamine site. Catalysis depends on residues H509 and E511.

It belongs to the CTP synthase family. Homotetramer.

It catalyses the reaction UTP + L-glutamine + ATP + H2O = CTP + L-glutamate + ADP + phosphate + 2 H(+). The enzyme catalyses L-glutamine + H2O = L-glutamate + NH4(+). It carries out the reaction UTP + NH4(+) + ATP = CTP + ADP + phosphate + 2 H(+). Its pathway is pyrimidine metabolism; CTP biosynthesis via de novo pathway; CTP from UDP: step 2/2. Allosterically activated by GTP, when glutamine is the substrate; GTP has no effect on the reaction when ammonia is the substrate. The allosteric effector GTP functions by stabilizing the protein conformation that binds the tetrahedral intermediate(s) formed during glutamine hydrolysis. Inhibited by the product CTP, via allosteric rather than competitive inhibition. Catalyzes the ATP-dependent amination of UTP to CTP with either L-glutamine or ammonia as the source of nitrogen. Regulates intracellular CTP levels through interactions with the four ribonucleotide triphosphates. The protein is CTP synthase of Rickettsia conorii (strain ATCC VR-613 / Malish 7).